The chain runs to 350 residues: dTDP-D-glucose 4,6-dehydratase (350 aa).

T142 contacts substrate. The active-site Proton donor is D143. Catalysis depends on proton acceptor residues E144 and Y166.

It belongs to the NAD(P)-dependent epimerase/dehydratase family. dTDP-glucose dehydratase subfamily. The cofactor is NAD(+).

It catalyses the reaction dTDP-alpha-D-glucose = dTDP-4-dehydro-6-deoxy-alpha-D-glucose + H2O. The polypeptide is dTDP-D-glucose 4,6-dehydratase (TGDS) (Homo sapiens (Human)).